The primary structure comprises 303 residues: N-acetyl-D-glucosamine kinase (303 aa).

Residues 4-11 (GFDIGGTK) and 133-140 (GVGGGLIF) each bind ATP. Zn(2+) is bound by residues histidine 157, cysteine 177, cysteine 179, and cysteine 184.

This sequence belongs to the ROK (NagC/XylR) family. NagK subfamily.

The catalysed reaction is N-acetyl-D-glucosamine + ATP = N-acetyl-D-glucosamine 6-phosphate + ADP + H(+). It functions in the pathway cell wall biogenesis; peptidoglycan recycling. Functionally, catalyzes the phosphorylation of N-acetyl-D-glucosamine (GlcNAc) derived from cell-wall degradation, yielding GlcNAc-6-P. In Shigella boydii serotype 4 (strain Sb227), this protein is N-acetyl-D-glucosamine kinase.